The primary structure comprises 361 residues: Phosphoserine aminotransferase (361 aa).

R42 is an L-glutamate binding site. Pyridoxal 5'-phosphate-binding positions include 76–77 (AR), W102, T153, D173, and Q196. K197 carries the post-translational modification N6-(pyridoxal phosphate)lysine. 238-239 (NT) lines the pyridoxal 5'-phosphate pocket.

The protein belongs to the class-V pyridoxal-phosphate-dependent aminotransferase family. SerC subfamily. In terms of assembly, homodimer. The cofactor is pyridoxal 5'-phosphate.

The protein resides in the cytoplasm. The catalysed reaction is O-phospho-L-serine + 2-oxoglutarate = 3-phosphooxypyruvate + L-glutamate. It carries out the reaction 4-(phosphooxy)-L-threonine + 2-oxoglutarate = (R)-3-hydroxy-2-oxo-4-phosphooxybutanoate + L-glutamate. It participates in amino-acid biosynthesis; L-serine biosynthesis; L-serine from 3-phospho-D-glycerate: step 2/3. It functions in the pathway cofactor biosynthesis; pyridoxine 5'-phosphate biosynthesis; pyridoxine 5'-phosphate from D-erythrose 4-phosphate: step 3/5. In terms of biological role, catalyzes the reversible conversion of 3-phosphohydroxypyruvate to phosphoserine and of 3-hydroxy-2-oxo-4-phosphonooxybutanoate to phosphohydroxythreonine. This Yersinia enterocolitica serotype O:8 / biotype 1B (strain NCTC 13174 / 8081) protein is Phosphoserine aminotransferase.